A 305-amino-acid polypeptide reads, in one-letter code: Homoserine kinase (305 aa).

Residue 90–100 (PLARGLGSSAS) participates in ATP binding.

Belongs to the GHMP kinase family. Homoserine kinase subfamily.

It localises to the cytoplasm. The enzyme catalyses L-homoserine + ATP = O-phospho-L-homoserine + ADP + H(+). The protein operates within amino-acid biosynthesis; L-threonine biosynthesis; L-threonine from L-aspartate: step 4/5. Functionally, catalyzes the ATP-dependent phosphorylation of L-homoserine to L-homoserine phosphate. The polypeptide is Homoserine kinase (Staphylococcus haemolyticus (strain JCSC1435)).